Reading from the N-terminus, the 372-residue chain is Cytochrome b (372 aa).

Helical transmembrane passes span 25-45 (FGSM…FLAI), 69-90 (WMMQ…YIHI), 105-125 (WLSG…GYVL), and 170-190 (FFAL…IHIM). 2 residues coordinate heme b: His-75 and His-89. Residues His-174 and His-188 each contribute to the heme b site. His-193 contributes to the a ubiquinone binding site. The next 4 helical transmembrane spans lie at 218–238 (HKDM…MSFT), 280–300 (LGGT…PFTH), 312–332 (LMQF…WAAT), and 339–358 (FTSI…TMNP).

This sequence belongs to the cytochrome b family. As to quaternary structure, the cytochrome bc1 complex contains 3 respiratory subunits (MT-CYB, CYC1 and UQCRFS1), 2 core proteins (UQCRC1 and UQCRC2) and probably 6 low-molecular weight proteins. Heme b serves as cofactor.

It is found in the mitochondrion inner membrane. In terms of biological role, component of the ubiquinol-cytochrome c reductase complex (complex III or cytochrome b-c1 complex) that is part of the mitochondrial respiratory chain. The b-c1 complex mediates electron transfer from ubiquinol to cytochrome c. Contributes to the generation of a proton gradient across the mitochondrial membrane that is then used for ATP synthesis. This is Cytochrome b (MT-CYB) from Pantherophis vulpinus (Western fox snake).